Consider the following 140-residue polypeptide: Large ribosomal subunit protein uL14 (140 aa).

The protein belongs to the universal ribosomal protein uL14 family. As to quaternary structure, component of the large ribosomal subunit.

It is found in the cytoplasm. Component of the large ribosomal subunit. The ribosome is a large ribonucleoprotein complex responsible for the synthesis of proteins in the cell. This chain is Large ribosomal subunit protein uL14 (rpl23), found in Ictalurus punctatus (Channel catfish).